A 957-amino-acid polypeptide reads, in one-letter code: Dystrophin-related protein 2 (957 aa).

2 Spectrin repeats span residues 102–179 and 231–337; these read DHSG…EELE and EHLL…QLQD. Positions 358–383 constitute a WW domain; that stretch reads WERAISPNKVPYYINHQAQTTCWDHP. A ZZ-type; degenerate zinc finger spans residues 605–661; it reads KHQTKCSICRQCPIKGFRYRSLKQFNVDICQTCFLTGKASKGNKLHYPIMEYYTPTT. 4 residues coordinate Zn(2+): C610, C613, C634, and C637. S748 carries the phosphoserine modification. Residues 877–894 show a composition bias toward low complexity; the sequence is PPTESDGNGSAGSSLASS. Positions 877–923 are disordered; sequence PPTESDGNGSAGSSLASSPRQSEGSHPREKGQTTPDTEAADDVGSKS. T910 bears the Phosphothreonine mark.

As to quaternary structure, interacts with PRX; this enhances phosphorylation. Identified in a dystroglycan complex that contains at least PRX, DRP2, UTRN, DMD and DAG1. In terms of tissue distribution, detected in trigeminal nerve Schwann cells. Detected in brain cortex and hippocampus. Detected in brain membrane fractions and highly enriched in the postsynaptic density (at protein level).

It localises to the postsynaptic density. It is found in the cell projection. Its subcellular location is the dendrite. The protein resides in the perikaryon. The protein localises to the cell membrane. Required for normal myelination and for normal organization of the cytoplasm and the formation of Cajal bands in myelinating Schwann cells. Required for normal PRX location at appositions between the abaxonal surface of the myelin sheath and the Schwann cell plasma membrane. Possibly involved in membrane-cytoskeleton interactions of the central nervous system. The protein is Dystrophin-related protein 2 (Drp2) of Rattus norvegicus (Rat).